The primary structure comprises 256 residues: DNA repair protein RecO (256 aa).

It belongs to the RecO family.

Its function is as follows. Involved in DNA repair and RecF pathway recombination. The chain is DNA repair protein RecO from Nocardia farcinica (strain IFM 10152).